Here is a 502-residue protein sequence, read N- to C-terminus: Neuronal acetylcholine receptor subunit alpha-7 (502 aa).

Positions 1–22 (MRCSPGGVWLALAASLLHVSLQ) are cleaved as a signal peptide. Over 23–233 (GEFQRKLYKE…VTMRRRTLYY (211 aa)) the chain is Extracellular. 2 residues coordinate Ca(2+): Arg-42 and Val-44. N-linked (GlcNAc...) asparagine glycans are attached at residues Asn-46, Asn-90, and Asn-133. Cys-150 and Cys-164 are joined by a disulfide. Positions 172 and 210 each coordinate Ca(2+). The cysteines at positions 212 and 213 are disulfide-linked. Helical transmembrane passes span 234 to 254 (GLNLLIPCVLISALALLVFLL), 259 to 279 (GEKISLGITVLLSLTVFMLLV), and 292 to 315 (LIAQYFASTMIIVGLSVVVTVIVL). The essential for TMEM35A/NACHO-mediated proper subunit assembly and trafficking to cell membrane stretch occupies residues 260–267 (EKISLGIT). Topologically, residues 316 to 466 (QYHHHDPDGG…CSEWKFAACV (151 aa)) are cytoplasmic. The helical transmembrane segment at 467 to 489 (VDRLCLMAFSVFTIICTIGILMS) threads the bilayer.

It belongs to the ligand-gated ion channel (TC 1.A.9) family. Acetylcholine receptor (TC 1.A.9.1) subfamily. Alpha-7/CHRNA7 sub-subfamily. In terms of assembly, homopentamer. Can also form heteropentamers with CHRNB2, mainly found in basal forebrain cholinergic neurons. Interacts with RIC3; which is required for proper folding and assembly. Interacts with LYPD6. Interacts with CANX. In terms of processing, glycosylations at Asn-46, Asn-90 and Asn-133 are essential for TMEM35A/NACHO-mediated proper subunit assembly and trafficking to the cell membrane. In terms of tissue distribution, expressed in neuronal cells. Expressed in macrophages (at protein level).

Its subcellular location is the postsynaptic cell membrane. It localises to the cell membrane. The enzyme catalyses Ca(2+)(in) = Ca(2+)(out). The catalysed reaction is K(+)(in) = K(+)(out). It catalyses the reaction Na(+)(in) = Na(+)(out). It carries out the reaction choline(out) = choline(in). The enzyme catalyses NH4(+)(in) = NH4(+)(out). The catalysed reaction is L-arginine(in) = L-arginine(out). It catalyses the reaction guanidine(out) = guanidine(in). Activated by a myriad of ligands such as acetylcholine, cytisine, nicotine, choline and epibatidine. Oligomeric amyloid-beta protein 42 activates specifially CHRNA7:CHRNB2 nAchRs. Activity is modulated by positive allosteric modulators (PAMs), such as flavonoids, with a wide range of chemical diversity, pharmacological sensitivity and efficacy. AChR activity is inhibited by the antagonists alpha-conotoxons RgIA, ImI and ImII, small disulfide-constrained peptides from cone snails. Alpha-conotoxin PnIC selectively inhibits CHRNA7:CHRNB2 over CHRNA7 homopentamer. In terms of biological role, component of neuronal acetylcholine receptors (nAChRs) that function as pentameric, ligand-gated cation channels with high calcium permeability among other activities. nAChRs are excitatory neurotrasnmitter receptors formed by a collection of nAChR subunits known to mediate synaptic transmission in the nervous system and the neuromuscular junction. Each nAchR subunit confers differential attributes to channel properties, including activation, deactivation and desensitization kinetics, pH sensitivity, cation permeability, and binding to allosteric modulators. CHRNA7 forms homopentameric neuronal acetylcholine receptors abundantly expressed in the central nervous system, characterized by fast desensitization and high calcium permeability. Also forms heteropentamers with CHRNB2, mainly expressed in basal forebrain cholinergic neurons. Involved in the modulation of calcium-dependent signaling pathways and influences the release of neurotransmitters, including dopamine, glutamate and GABA. Also expressed in non-neuronal cells such as immune cells like lymphocytes, monocytes and macrophages. In T cells, activation induces metabotropic signaling that results in an increase of intracellular Ca2+ concentrations, independent of ionotropic receptor functions. In macrophages, required for acetylcholine-mediated inhibition of TNF and other inflammatory cytokine release. Once activated by acetylcholine, nicotine or other agonists, selectively inhibits production of pro-inflammatory cytokines while leaving anti-inflammatory cytokines undisturbed. Stimulates the cholinergic anti-inflammatory pathway, controlling inflammation by inhibiting NFKB nuclear translocation and activating the JAK2-STAT3 pathway, independently of ion channel activity. Also expressed in the urothelium where it modulates reflex bladder activity by increasing intracellular calcium through internal stores and decreasing basal ATP release. The polypeptide is Neuronal acetylcholine receptor subunit alpha-7 (Homo sapiens (Human)).